We begin with the raw amino-acid sequence, 908 residues long: E3 ubiquitin-protein ligase ZNF598 (908 aa).

The segment at 27 to 67 (CVLCCGDLEATALGRCDHPVCYRCSTKMRVLCEQRYCAVCR) adopts an RING-type zinc-finger fold. The C2H2-type zinc-finger motif lies at 185-208 (PLCKFCDERYLDNDELLKHLRRDH). Disordered regions lie at residues 292-338 (SRRS…KREE), 350-441 (SVAA…EEDF), 467-557 (PGPP…TVQG), 569-619 (SLLA…LEAP), and 719-744 (PSSHSACAPSPTTTTTTTTTTKTPGL). Phosphoserine is present on serine 295. Tyrosine 304 is subject to Phosphotyrosine. Over residues 313–329 (QGRAGRASGRGAQQNRR) the composition is skewed to low complexity. Over residues 358-385 (ETQRVEDREEGSRPKKEEAAARVPEEPR) the composition is skewed to basic and acidic residues. Serine 433 bears the Phosphoserine mark. A compositionally biased stretch (low complexity) spans 482–501 (PALVSSAPKPSSAPSSLISA). The span at 529–538 (KAGKGSRGGR) shows a compositional bias: basic residues.

The protein belongs to the ZNF598/HEL2 family. In terms of assembly, interacts with the E2 ubiquitin-conjugating enzyme UBE2D3. Component of the 4EHP-GYF2 complex, at least composed of EIF4E2, GIGYF2 and ZNF598.

The protein localises to the cytoplasm. Its subcellular location is the cytosol. The enzyme catalyses S-ubiquitinyl-[E2 ubiquitin-conjugating enzyme]-L-cysteine + [acceptor protein]-L-lysine = [E2 ubiquitin-conjugating enzyme]-L-cysteine + N(6)-ubiquitinyl-[acceptor protein]-L-lysine.. Its pathway is protein modification; protein ubiquitination. E3 ubiquitin-protein ligase that plays a key role in the ribosome quality control (RQC), a pathway that takes place when a ribosome has stalled during translation, leading to degradation of nascent peptide chains. ZNF598 is activated when ribosomes are stalled within an mRNA following translation of prematurely polyadenylated mRNAs. Acts as a ribosome collision sensor: specifically recognizes and binds collided di-ribosome, which arises when a trailing ribosome encounters a slower leading ribosome, leading to terminally arrest translation. Following binding to colliding ribosomes, mediates monoubiquitination of 40S ribosomal proteins RPS10/eS10 and RPS3/uS3, and 'Lys-63'-linked polyubiquitination of RPS20/uS10. Polyubiquitination of RPS20/uS10 promotes recruitment of the RQT (ribosome quality control trigger) complex, which drives the disassembly of stalled ribosomes, followed by degradation of nascent peptides. E3 ubiquitin-protein ligase activity is dependent on the E2 ubiquitin-conjugating enzyme UBE2D3. Also acts as an adapter that recruits the 4EHP-GYF2 complex to mRNAs. Independently of its role in RQC, may also act as a negative regulator of interferon-stimulated gene (ISG) expression. This is E3 ubiquitin-protein ligase ZNF598 from Mus musculus (Mouse).